The following is a 759-amino-acid chain: Rho GTPase-activating protein 26 (759 aa).

The BAR domain occupies 7-262 (EFSDCYLDSP…MKENPHEHLA (256 aa)). The region spanning 265–369 (PYTMEGYLYV…WMEAMDGREP (105 aa)) is the PH domain. A Rho-GAP domain is found at 383 to 568 (AQLDNIGFSI…IIIENYEKMF (186 aa)). Positions 578 to 701 (NSQLHLSRKR…STSSDSSPVS (124 aa)) are disordered. The span at 608-617 (HNTEKEEKRN) shows a compositional bias: basic and acidic residues. Residues 618–637 (SVNSSAESVSSSNANSSANS) are compositionally biased toward low complexity. The span at 638–650 (TCTQCSNMNNLNA) shows a compositional bias: polar residues. A compositionally biased stretch (low complexity) spans 679-701 (PMFSAPSSPMPTSSTSSDSSPVS). An SH3 domain is found at 701–759 (SVPRKAKALYACKAEHDSELSFSAGTVFDNVYPSQEPGWLEGILNGKTGLIPENYVEFL).

The protein localises to the cell junction. The protein resides in the focal adhesion. It is found in the cytoplasm. It localises to the cytoskeleton. Its subcellular location is the endosome membrane. Functionally, GTPase-activating protein for rhoa and cdc42. This chain is Rho GTPase-activating protein 26 (arhgap26), found in Xenopus tropicalis (Western clawed frog).